Reading from the N-terminus, the 94-residue chain is MIHSPTLKKNLFVANHLRAKINKLNNKKKKEIIVTWSRASTIIPIMIGHMISIHNGKEHLPIYITDHMVGHKLGEFVPTLNFRGHAKSDNRSRR.

This sequence belongs to the universal ribosomal protein uS19 family.

The protein localises to the plastid. Its function is as follows. Protein S19 forms a complex with S13 that binds strongly to the 16S ribosomal RNA. In Epifagus virginiana (Beechdrops), this protein is Small ribosomal subunit protein uS19c (rps19).